Consider the following 470-residue polypeptide: Nuclear receptor ROR-beta (470 aa).

Positions 18 to 93 form a DNA-binding region, nuclear receptor; the sequence is VIPCKICGDK…LGMSRDAVKF (76 aa). 2 consecutive NR C4-type zinc fingers follow at residues 21 to 41 and 57 to 81; these read CKIC…CEGC and CPRQ…LQKC. Over residues 104-117 the composition is skewed to basic and acidic residues; it reads LYAEVQKHQQRLQE. Positions 104–127 are disordered; the sequence is LYAEVQKHQQRLQEQRQQQSGEAE. An NR LBD domain is found at 222–460; it reads EIDRIAQNII…TLFPPLYKEL (239 aa). Positions 456-461 match the AF-2 motif; the sequence is LYKELF.

Belongs to the nuclear hormone receptor family. NR1 subfamily. Monomer. Interacts with CRX. Expressed in inner and outer neuroblastic layer as well as in the ganglion cell layer of the developing retina. Expressed in bone marrow osteoprogenitor cells.

The protein resides in the nucleus. It localises to the nucleoplasm. Functionally, nuclear receptor that binds DNA as a monomer to ROR response elements (RORE) containing a single core motif half-site 5'-AGGTCA-3' preceded by a short A-T-rich sequence. Considered to have intrinsic transcriptional activity, have some natural ligands such as all-trans retinoic acid (ATRA) and other retinoids which act as inverse agonists repressing the transcriptional activity. Required for normal postnatal development of rod and cone photoreceptor cells. Modulates rod photoreceptors differentiation at least by inducing the transcription factor NRL-mediated pathway. In cone photoreceptor cells, regulates transcription of OPN1SW. Involved in the regulation of the period length and stability of the circadian rhythm. May control cytoarchitectural patterning of neocortical neurons during development. May act in a dose-dependent manner to regulate barrel formation upon innervation of layer IV neurons by thalamocortical axons. May play a role in the suppression of osteoblastic differentiation through the inhibition of RUNX2 transcriptional activity. Its function is as follows. Isoform 1 is critical for hindlimb motor control and for the differentiation of amacrine and horizontal cells in the retina. Regulates the expression of PTF1A synergistically with FOXN4. In Mus musculus (Mouse), this protein is Nuclear receptor ROR-beta (Rorb).